The primary structure comprises 339 residues: Cyclin-Y-like protein 1-A (339 aa).

A compositionally biased stretch (polar residues) spans 1 to 13 (MGNTVTCCVSPDS). Residues 1-42 (MGNTVTCCVSPDSSPKEGRDREVTESGEPYQAQGEPQDGDVQ) are disordered. Positions 14 to 24 (SPKEGRDREVT) are enriched in basic and acidic residues. Residues 141-263 (DIFDEKLHPI…FLELLQFNIN (123 aa)) form the Cyclin N-terminal domain.

The protein belongs to the cyclin family. Cyclin Y subfamily.

The polypeptide is Cyclin-Y-like protein 1-A (ccnyl1-a) (Xenopus laevis (African clawed frog)).